Reading from the N-terminus, the 700-residue chain is MNSYIKNHCYLCITQEKIMTLTYKYSTMDRLLSLHNILKENNVDRLRELIESDKDVINMYDSNRLLPLHIAIEHSDIEIVEMLLDNNAVINGGETIKTHPINIAMILAGGRMMLYNDNKPVKPSKRIRRLLTVNNTEKYTKIVKLLIKHGADLKMVCRSYVLDFYKGGSYCIKTGYAIGYSYFSTIPLCQILWEETKHPSLYYMRRITIKCAIRAVNIELVKHFISNNLLADTDTALEDYFLEAVKTNSPKMVKLFLDSGIDINSTICENSHTALYHAVEQENVTLVMLLLNHGADPDIGDIYSMLKYAIMSSKHGVKLFNILVKNGARIRCCNDILIEAICKRYYSIISYILSLPVNYLPISILCMCIYELRNLPITRKLLKKINDINVSCDACNMYPIHAAVSINTSRLTRLLINKGADVNVRNRYGKTPIHLACMYSKIGNIKVLIKNGANVNERDNYGITPLMICSREGKVSNMEYLLANGADVNQTDYDKNTALTYAIRNKSKECTRVLLEHGADMCFMNRFHTPITIHKTHDNPAVFLAVIYLYFSVINDSSIRNKQGFVRNMRFVNNHKETKSLKDEIENELSIMKDNVFYTGDKKISLYDVLILDKLDDLANTIKRIRRIDLKQIIIFRRFIKKHIKYMEKRNSAIESVLSIINEYTSKDHLSRWWLLSPEIHRVIVSNLSMEDLKTISGYY.

11 ANK repeats span residues 29–59, 63–92, 126–155, 204–233, 236–265, 270–299, 301–332, 395–424, 428–457, 461–490, and 494–523; these read DRLLSLHNILKENNVDRLRELIESDKDVINM, NRLLPLHIAIEHSDIEIVEMLLDNNAVING, RIRRLLTVNNTEKYTKIVKLLIKHGADLKM, MRRITIKCAIRAVNIELVKHFISNNLLADT, ALEDYFLEAVKTNSPKMVKLFLDSGIDINS, NSHTALYHAVEQENVTLVMLLLNHGADPDI, DIYSMLKYAIMSSKHGVKLFNILVKNGARIRC, CNMYPIHAAVSINTSRLTRLLINKGADVNV, YGKTPIHLACMYSKIGNIKVLIKNGANVNE, YGITPLMICSREGKVSNMEYLLANGADVNQ, and DKNTALTYAIRNKSKECTRVLLEHGADMCF.

This Fowlpox virus (strain NVSL) (FPV) protein is Putative ankyrin repeat protein FPV018.